The primary structure comprises 272 residues: MRKLIEGLRHFRTSYYPSHRDLFEQFAKGQHPRVLFITCSDSRIDPNLITQSGMGELFVIRNAGNLIPPFGAANGGEGASIEYAIAALNIEHVVVCGHSHCGAMKGLLKLNQLQEDMPLVYDWLQHAQATRRLVLDNYSGYETDDLVEILVAENVLTQIENLKTYPIVRSRLFQGKLQIFGWIYEVESGEVLQISRTSSDDTGIDECPVRLPGSQEKAILGRCVVPLTEEVAVAPPEPEPVIAAVAAPPANYSSRGWLAPEQQQRIYRGNAS.

The Zn(2+) site is built by cysteine 39, histidine 98, and cysteine 101.

This sequence belongs to the beta-class carbonic anhydrase family. In terms of assembly, a hexamer formed by a trimer of dimers. Purified from carboxysomes with the both RuBisCO subunits and the full-length form of CcmM, probably interacts with the N-terminus of CcmM. Zn(2+) is required as a cofactor.

The protein resides in the carboxysome. The catalysed reaction is hydrogencarbonate + H(+) = CO2 + H2O. Its function is as follows. Reversible hydration of carbon dioxide. Essential to photosynthetic carbon dioxide fixation, supplies CO(2) to RuBisCO (ribulose bisphosphate carboxylase, rbcL-rbcS) in the carboxysome. Loss of activity results in limitation of CO(2) availability to RuBisCO located in the cytoplasm. This Synechococcus elongatus (strain ATCC 33912 / PCC 7942 / FACHB-805) (Anacystis nidulans R2) protein is Carbonic anhydrase.